We begin with the raw amino-acid sequence, 454 residues long: Bifunctional protein GlmU (454 aa).

The tract at residues 1-226 (MTTTVIILAA…AFEVEGVNDR (226 aa)) is pyrophosphorylase. Residues 8 to 11 (LAAG), Lys-22, Gln-73, 78 to 79 (GT), 100 to 102 (YGD), Gly-137, Glu-151, Asn-166, and Asn-224 each bind UDP-N-acetyl-alpha-D-glucosamine. Asp-102 is a binding site for Mg(2+). Residue Asn-224 participates in Mg(2+) binding. The linker stretch occupies residues 227–247 (LQLAALEREFQLQQAKSLMQQ). The interval 248–454 (GVTLTDPSRF…NYQRPQKLKK (207 aa)) is N-acetyltransferase. UDP-N-acetyl-alpha-D-glucosamine is bound by residues Arg-330 and Lys-348. Residue His-360 is the Proton acceptor of the active site. 2 residues coordinate UDP-N-acetyl-alpha-D-glucosamine: Tyr-363 and Asn-374. Acetyl-CoA contacts are provided by residues Ala-377, 383 to 384 (NY), Ser-402, Ala-420, and Arg-437.

This sequence in the N-terminal section; belongs to the N-acetylglucosamine-1-phosphate uridyltransferase family. The protein in the C-terminal section; belongs to the transferase hexapeptide repeat family. As to quaternary structure, homotrimer. Mg(2+) is required as a cofactor.

The protein resides in the cytoplasm. The catalysed reaction is alpha-D-glucosamine 1-phosphate + acetyl-CoA = N-acetyl-alpha-D-glucosamine 1-phosphate + CoA + H(+). It carries out the reaction N-acetyl-alpha-D-glucosamine 1-phosphate + UTP + H(+) = UDP-N-acetyl-alpha-D-glucosamine + diphosphate. The protein operates within nucleotide-sugar biosynthesis; UDP-N-acetyl-alpha-D-glucosamine biosynthesis; N-acetyl-alpha-D-glucosamine 1-phosphate from alpha-D-glucosamine 6-phosphate (route II): step 2/2. Its pathway is nucleotide-sugar biosynthesis; UDP-N-acetyl-alpha-D-glucosamine biosynthesis; UDP-N-acetyl-alpha-D-glucosamine from N-acetyl-alpha-D-glucosamine 1-phosphate: step 1/1. It functions in the pathway bacterial outer membrane biogenesis; LPS lipid A biosynthesis. In terms of biological role, catalyzes the last two sequential reactions in the de novo biosynthetic pathway for UDP-N-acetylglucosamine (UDP-GlcNAc). The C-terminal domain catalyzes the transfer of acetyl group from acetyl coenzyme A to glucosamine-1-phosphate (GlcN-1-P) to produce N-acetylglucosamine-1-phosphate (GlcNAc-1-P), which is converted into UDP-GlcNAc by the transfer of uridine 5-monophosphate (from uridine 5-triphosphate), a reaction catalyzed by the N-terminal domain. This chain is Bifunctional protein GlmU, found in Acinetobacter baylyi (strain ATCC 33305 / BD413 / ADP1).